We begin with the raw amino-acid sequence, 228 residues long: Ribulose-phosphate 3-epimerase (228 aa).

Serine 12 provides a ligand contact to substrate. A divalent metal cation-binding residues include histidine 37, aspartate 39, and histidine 70. The active-site Proton acceptor is the aspartate 39. Residues histidine 70, 146 to 149, 176 to 178, and 198 to 199 contribute to the substrate site; these read GFGG, DGG, and GS. An a divalent metal cation-binding site is contributed by aspartate 176. Aspartate 176 functions as the Proton donor in the catalytic mechanism.

Belongs to the ribulose-phosphate 3-epimerase family. A divalent metal cation serves as cofactor.

The enzyme catalyses D-ribulose 5-phosphate = D-xylulose 5-phosphate. It participates in carbohydrate degradation. Functionally, catalyzes the reversible epimerization of D-ribulose 5-phosphate to D-xylulose 5-phosphate. The protein is Ribulose-phosphate 3-epimerase of Rhodobacter capsulatus (Rhodopseudomonas capsulata).